Consider the following 454-residue polypeptide: CBL-interacting protein kinase 33 (454 aa).

One can recognise a Protein kinase domain in the interval 13 to 268; sequence YELGRTIGEG…IPEILEDEWF (256 aa). Residues 19–27 and Lys42 each bind ATP; that span reads IGEGTFAKV. Asp136 functions as the Proton acceptor in the catalytic mechanism. Residues 154–183 are activation loop; the sequence is DFGLSALSQQIKDDGLLHTTCGTPNYVAPE. An NAF domain is found at 305–329; sequence EEPEALNAFELISMSAGLNLGNLFD. Residues 335-364 are PPI; that stretch reads KRETRFTSKCPPKEIVRKIEEAAKPLGFDV.

Belongs to the protein kinase superfamily. CAMK Ser/Thr protein kinase family. SNF1 subfamily. Requires Mn(2+) as cofactor.

The catalysed reaction is L-seryl-[protein] + ATP = O-phospho-L-seryl-[protein] + ADP + H(+). It catalyses the reaction L-threonyl-[protein] + ATP = O-phospho-L-threonyl-[protein] + ADP + H(+). CIPK serine-threonine protein kinases interact with CBL proteins. Binding of a CBL protein to the regulatory NAF domain of CIPK protein lead to the activation of the kinase in a calcium-dependent manner. The chain is CBL-interacting protein kinase 33 (CIPK33) from Oryza sativa subsp. japonica (Rice).